Consider the following 282-residue polypeptide: Mitochondrial outer membrane protein porin (282 aa).

This sequence belongs to the eukaryotic mitochondrial porin family.

The protein localises to the mitochondrion outer membrane. Forms a channel through the cell membrane that allows diffusion of small hydrophilic molecules. The channel adopts an open conformation at low or zero membrane potential and a closed conformation at potentials above 30-40 mV. The open state has a weak anion selectivity whereas the closed state is cation-selective. The polypeptide is Mitochondrial outer membrane protein porin (POR1) (Candida albicans (strain SC5314 / ATCC MYA-2876) (Yeast)).